The sequence spans 131 residues: Anaerobic and virulence modulator AnvM (131 aa).

Functionally, plays an essential role by modulating the expression of hundreds of genes including quorum sensing system genes and oxidative stress resistance genes under both aerobic and anaerobic conditions. The polypeptide is Anaerobic and virulence modulator AnvM (Pseudomonas aeruginosa (strain ATCC 15692 / DSM 22644 / CIP 104116 / JCM 14847 / LMG 12228 / 1C / PRS 101 / PAO1)).